The chain runs to 590 residues: Beta-fructofuranosidase, insoluble isoenzyme 4 (590 aa).

The signal sequence occupies residues 1–28; the sequence is MVMAPIPQPWHQWPFLILFFLVLFSCES. Substrate contacts are provided by residues 71–74 and Gln90; that span reads WIND. Asp74 is an active-site residue. N-linked (GlcNAc...) asparagine glycosylation occurs at Asn94. Substrate contacts are provided by residues Trp98 and 133 to 134; that span reads WT. Residue Asn167 is glycosylated (N-linked (GlcNAc...) asparagine). 198-199 is a substrate binding site; sequence RD. The N-linked (GlcNAc...) asparagine glycan is linked to Asn247. 2 residues coordinate substrate: Glu253 and Asp287. The N-linked (GlcNAc...) asparagine glycan is linked to Asn345. A disulfide bridge links Cys445 with Cys491. An N-linked (GlcNAc...) asparagine glycan is attached at Asn565.

This sequence belongs to the glycosyl hydrolase 32 family. As to expression, expressed in leaves. Expressed at moderate levels in roots and flowers, and weakly in seeds.

It is found in the secreted. Its subcellular location is the extracellular space. The protein localises to the apoplast. The protein resides in the cell wall. It carries out the reaction Hydrolysis of terminal non-reducing beta-D-fructofuranoside residues in beta-D-fructofuranosides.. Its function is as follows. May play a role in sucrose partitioning during seed development and in stress response. This chain is Beta-fructofuranosidase, insoluble isoenzyme 4 (CIN4), found in Oryza sativa subsp. japonica (Rice).